The chain runs to 355 residues: Syntaxin-5 (355 aa).

Residues 1–333 are Cytoplasmic-facing; that stretch reads MIPRKRYGSK…KYFQSVTSNR (333 aa). The segment covering 28–37 has biased composition (polar residues); it reads PATAGSSSSD. The tract at residues 28–51 is disordered; it reads PATAGSSSSDIAPLPPPVTLVPPP. A compositionally biased stretch (pro residues) spans 40–51; that stretch reads PLPPPVTLVPPP. The IxM motif; signal for cargo packaging into COPII-coated vesicles signature appears at 245–247; that stretch reads IDM. The region spanning 263 to 325 is the t-SNARE coiled-coil homology domain; the sequence is DSYIQSRADT…EAAHSEILKY (63 aa). Positions 287–318 form a coiled coil; it reads FQQLAHMVKEQEETIQRIDENVLGAQLDVEAA. The chain crosses the membrane as a helical; Anchor for type IV membrane protein span at residues 334–354; that stretch reads WLMVKIFLILIVFFIIFVVFL. Alanine 355 is a topological domain (vesicular).

This sequence belongs to the syntaxin family. In terms of assembly, part of a ternary complex containing STX5A, NSFL1C and VCP. Identified in a unique SNARE complex composed of the Golgi SNAREs GOSR1, GOSR2, YKT6 and VTI1A. Component of a SNARE complex consisting of STX5, YKT6, GOSR1 and BET1L. Interacts with BET1L. Interacts with BET1. Interacts with COG4. Interacts with GM130/GOLGA2. Interacts (via IxM motif) with SEC24C and SEC24D; mediates STX5 packaging into COPII-coated vesicles. Interacts with VLDLR; this interaction mediates VLDLR translocation from the endoplasmic reticulum to the plasma membrane.

The protein localises to the endoplasmic reticulum-Golgi intermediate compartment membrane. The protein resides in the golgi apparatus membrane. Mediates endoplasmic reticulum to Golgi transport. Together with p115/USO1 and GM130/GOLGA2, involved in vesicle tethering and fusion at the cis-Golgi membrane to maintain the stacked and inter-connected structure of the Golgi apparatus. In terms of biological role, required for Golgi to endoplasmic reticulum retrogade transport, and for intra-Golgi transport. Its function is as follows. (Microbial infection) Required for the efficient production of infectious virion during human cytomegalovirus infection. Mechanistically, participates in the formation of the cytoplasmic viral assembly compartment where tegument acquisition and envelopment occur. This Homo sapiens (Human) protein is Syntaxin-5 (STX5).